The primary structure comprises 502 residues: Probable malate:quinone oxidoreductase (502 aa).

The protein belongs to the MQO family. Requires FAD as cofactor.

The enzyme catalyses (S)-malate + a quinone = a quinol + oxaloacetate. The protein operates within carbohydrate metabolism; tricarboxylic acid cycle; oxaloacetate from (S)-malate (quinone route): step 1/1. This is Probable malate:quinone oxidoreductase from Synechococcus sp. (strain CC9605).